Reading from the N-terminus, the 55-residue chain is Protein CADMIUM TOLERANCE 1 (55 aa).

Residues 24-40 (GCLYACIFTALCCFCCY) traverse the membrane as a helical segment.

The protein belongs to the CYSTM1 family.

It localises to the cell membrane. The protein localises to the secreted. It is found in the cell wall. Its function is as follows. Confers resistance to heavy metal ions (e.g. cadmium (CdCl(2)) and copper (CuCl(2))) by chelating them at the plasma membrane of root cells, thus stopping their entry and reducing their accumulation. This Digitaria ciliaris (Southern crabgrass) protein is Protein CADMIUM TOLERANCE 1.